The following is a 335-amino-acid chain: Fructose-1,6-bisphosphatase class 1 (335 aa).

Positions 92, 114, 116, and 117 each coordinate Mg(2+). Substrate-binding positions include 117–120 (DGSS), Asn209, and Lys275. Residue Glu281 participates in Mg(2+) binding.

The protein belongs to the FBPase class 1 family. Homotetramer. The cofactor is Mg(2+).

Its subcellular location is the cytoplasm. It catalyses the reaction beta-D-fructose 1,6-bisphosphate + H2O = beta-D-fructose 6-phosphate + phosphate. The protein operates within carbohydrate biosynthesis; gluconeogenesis. This chain is Fructose-1,6-bisphosphatase class 1, found in Verminephrobacter eiseniae (strain EF01-2).